We begin with the raw amino-acid sequence, 58 residues long: uncharacterized protein (58 aa).

Its subcellular location is the plastid. It is found in the chloroplast. This is an uncharacterized protein from Pyropia yezoensis (Susabi-nori).